The sequence spans 140 residues: Ribosome maturation factor RimP (140 aa).

The protein belongs to the RimP family.

The protein localises to the cytoplasm. Its function is as follows. Required for maturation of 30S ribosomal subunits. In Campylobacter lari (strain RM2100 / D67 / ATCC BAA-1060), this protein is Ribosome maturation factor RimP.